A 362-amino-acid polypeptide reads, in one-letter code: Heme A synthase (362 aa).

5 helical membrane-spanning segments follow: residues 12 to 32 (AVRI…LVGG), 102 to 122 (VIGA…DLGG), 128 to 148 (LWII…MVAS), 159 to 179 (VRLA…VWTL), and 198 to 218 (AAVL…VAGL). His262 serves as a coordination point for heme. 3 consecutive transmembrane segments (helical) span residues 264-281 (MLAY…IDAW), 289-309 (GALA…VTLL), and 312-332 (VPIG…TLAV). Residue His320 coordinates heme.

The protein belongs to the COX15/CtaA family. Type 2 subfamily. In terms of assembly, interacts with CtaB. Heme b serves as cofactor.

It is found in the cell membrane. It catalyses the reaction Fe(II)-heme o + 2 A + H2O = Fe(II)-heme a + 2 AH2. It functions in the pathway porphyrin-containing compound metabolism; heme A biosynthesis; heme A from heme O: step 1/1. Functionally, catalyzes the conversion of heme O to heme A by two successive hydroxylations of the methyl group at C8. The first hydroxylation forms heme I, the second hydroxylation results in an unstable dihydroxymethyl group, which spontaneously dehydrates, resulting in the formyl group of heme A. The protein is Heme A synthase of Rhodopseudomonas palustris (strain BisB18).